Here is a 357-residue protein sequence, read N- to C-terminus: Probable cinnamyl alcohol dehydrogenase (357 aa).

Residue Cys-47 participates in Zn(2+) binding. Ser-49 lines the NADP(+) pocket. Zn(2+)-binding residues include His-69, Glu-70, Cys-100, Cys-103, Cys-106, Cys-114, and Cys-163. NADP(+)-binding positions include Thr-167, 188–193 (GLGGVG), 211–216 (SSSDKK), Thr-251, Gly-275, and 298–300 (SFI).

It belongs to the zinc-containing alcohol dehydrogenase family. Homodimer. The cofactor is Zn(2+).

It catalyses the reaction (E)-cinnamyl alcohol + NADP(+) = (E)-cinnamaldehyde + NADPH + H(+). The enzyme catalyses (E)-coniferol + NADP(+) = (E)-coniferaldehyde + NADPH + H(+). The catalysed reaction is (E)-sinapyl alcohol + NADP(+) = (E)-sinapaldehyde + NADPH + H(+). It carries out the reaction (E)-4-coumaroyl alcohol + NADP(+) = (E)-4-coumaraldehyde + NADPH + H(+). It catalyses the reaction (E)-caffeyl alcohol + NADP(+) = (E)-caffeyl aldehyde + NADPH + H(+). It functions in the pathway aromatic compound metabolism; phenylpropanoid biosynthesis. In terms of biological role, involved in lignin biosynthesis. Catalyzes the final step specific for the production of lignin monomers. Catalyzes the NADPH-dependent reduction of coniferaldehyde, 5-hydroxyconiferaldehyde, sinapaldehyde, 4-coumaraldehyde and caffeyl aldehyde to their respective alcohols. This is Probable cinnamyl alcohol dehydrogenase from Pinus taeda (Loblolly pine).